The sequence spans 720 residues: Protein O-mannosyl-transferase 1 (720 aa).

Transmembrane regions (helical) follow at residues 7–27 (PVSVTVEINVLLLAVTALALF), 67–87 (FGHMILALGAYLGGFDGNFVW), 105–125 (LIPALAGSFCVPLAYLVVVEL), 127–147 (YSHFSALGACALLLMENSLIV), 150–170 (RFMLLESVLIFFLLLAVLSYL), 178–198 (SFFKWFWLVICGVSCAFGIGV), 201–221 (MGMFTYFLLLSLAAVHTWQLI), and 239–259 (FLALVVLPVIMYLGFFYIHLT). 3 MIR domains span residues 291-354 (PLDV…IKDP), 365-422 (PKPV…VDIV), and 426-486 (SEKE…VEEH). Transmembrane regions (helical) follow at residues 570 to 590 (IVTWTTGNITLVVYCLLFLTY), 609 to 629 (LVLAGVVCLGGWAVNYLPFFL), 633 to 653 (TLFLYHYLPALTFKILQIPIV), and 670 to 690 (AFGGVILAVLCSVYMSYHSLS).

It belongs to the glycosyltransferase 39 family. Widely expressed. Has particularly strong expression in testis, ovary, brain, liver and heart.

Its subcellular location is the endoplasmic reticulum membrane. The enzyme catalyses a di-trans,poly-cis-dolichyl beta-D-mannosyl phosphate + L-seryl-[protein] = 3-O-(alpha-D-mannosyl)-L-seryl-[protein] + a di-trans,poly-cis-dolichyl phosphate + H(+). It carries out the reaction a di-trans,poly-cis-dolichyl beta-D-mannosyl phosphate + L-threonyl-[protein] = 3-O-(alpha-D-mannosyl)-L-threonyl-[protein] + a di-trans,poly-cis-dolichyl phosphate + H(+). It participates in protein modification; protein glycosylation. Functionally, transfers mannosyl residues to the hydroxyl group of serine or threonine residues. Coexpression of both POMT1 and POMT2 is necessary for enzyme activity, expression of either POMT1 or POMT2 alone is insufficient. This Danio rerio (Zebrafish) protein is Protein O-mannosyl-transferase 1.